A 640-amino-acid chain; its full sequence is Probable Ufm1-specific protease (640 aa).

Catalysis depends on residues C467, D591, and H593.

It belongs to the peptidase C78 family.

Functionally, thiol protease which recognizes and hydrolyzes the peptide bond at the C-terminal Gly of ufm-1, a ubiquitin-like modifier protein bound to a number of target proteins. In Oryza sativa subsp. japonica (Rice), this protein is Probable Ufm1-specific protease.